The sequence spans 406 residues: Methyltransferase cfoD (406 aa).

S-adenosyl-L-methionine contacts are provided by Asp270 and Arg312. His315 acts as the Proton acceptor in catalysis.

This sequence belongs to the class I-like SAM-binding methyltransferase superfamily. Cation-independent O-methyltransferase family.

It participates in secondary metabolite biosynthesis; flavonoid biosynthesis. Its function is as follows. Methyltransferase; part of the gene cluster that mediates the biosynthesis of chlorflavonin, a fungal flavonoid with acetolactate synthase inhibitory activity. Within the pathway, cfoD is responsible for the methylation at position C3-OH of flavonoid. The pathway begins with the PKS-NRPS hybrid synthetase cfoA that uses benzoic acid or p-hydroxybenzoic acid as a starter unit with four rounds of chain elongation using malonyl-CoA to form the chalcone skeleton. Then, a new type of chalcone isomerase, cfoK, catalyzes the conversion of the chalcone into a flavanone by a histidine-mediated oxa-Michael addition mechanism. The desaturation of flavanone to flavone is catalyzed by a new type of flavone synthase, the flavin mononucleotide (FMN)-dependent oxidoreductase cfoJ. Monooxygenases cfoF, cfoG, and P450 cfoH are responsible for the hydroxylation of the flavonoid skeleton at sites C3, C8, and C2', respectively. Like cfoF, the dehydratase cfoI also plays a role in the hydroxylation of position C3. Methyltransferases cfoB, cfoC, and cfoD then catalyze the methylation of C7-OH, C8-OH, and C3-OH, respectively. Finally, the monooxygenase cfoE is responsible for the chlorination of flavonoid at position C3'. The chain is Methyltransferase cfoD from Aspergillus candidus.